A 709-amino-acid polypeptide reads, in one-letter code: Ribosomal RNA large subunit methyltransferase K/L (709 aa).

Positions 43-154 (LAYRITLWTR…NGVITIAMNF (112 aa)) constitute a THUMP domain.

Belongs to the methyltransferase superfamily. RlmKL family.

The protein localises to the cytoplasm. It catalyses the reaction guanosine(2445) in 23S rRNA + S-adenosyl-L-methionine = N(2)-methylguanosine(2445) in 23S rRNA + S-adenosyl-L-homocysteine + H(+). The enzyme catalyses guanosine(2069) in 23S rRNA + S-adenosyl-L-methionine = N(2)-methylguanosine(2069) in 23S rRNA + S-adenosyl-L-homocysteine + H(+). In terms of biological role, specifically methylates the guanine in position 2445 (m2G2445) and the guanine in position 2069 (m7G2069) of 23S rRNA. The sequence is that of Ribosomal RNA large subunit methyltransferase K/L from Shewanella baltica (strain OS155 / ATCC BAA-1091).